Here is a 544-residue protein sequence, read N- to C-terminus: Chaperonin GroEL 2 (544 aa).

ATP is bound by residues 29–32 (TLGP), 86–90 (DGTTT), Gly413, 479–481 (NAA), and Asp495.

This sequence belongs to the chaperonin (HSP60) family. In terms of assembly, forms a cylinder of 14 subunits composed of two heptameric rings stacked back-to-back. Interacts with the co-chaperonin GroES.

It is found in the cytoplasm. The enzyme catalyses ATP + H2O + a folded polypeptide = ADP + phosphate + an unfolded polypeptide.. Together with its co-chaperonin GroES, plays an essential role in assisting protein folding. The GroEL-GroES system forms a nano-cage that allows encapsulation of the non-native substrate proteins and provides a physical environment optimized to promote and accelerate protein folding. This chain is Chaperonin GroEL 2, found in Prochlorococcus marinus subsp. pastoris (strain CCMP1986 / NIES-2087 / MED4).